The sequence spans 368 residues: P2X receptor C (368 aa).

Topologically, residues 1–24 (MLDWDSILAYNTIKVVRIRDRRLG) are cytoplasmic. The helical transmembrane segment at 25 to 45 (ILHLIFMIAIISYVVIYSAII) threads the bilayer. The Lumenal portion of the chain corresponds to 46-368 (KKGYLSIEEP…DKLYHNIEAL (323 aa)). Residues 282–295 (RHAIRLIFIQTGVI) are pore-forming motif.

Belongs to the P2X receptor family.

The protein resides in the contractile vacuole membrane. Functionally, P2X receptors are ligand-gated ion channels that play a role in intracellular calcium signaling. ATP does not evoke inward currents in p2xC. Not essential for osmoregulation. In Dictyostelium discoideum (Social amoeba), this protein is P2X receptor C (p2xC).